Here is a 265-residue protein sequence, read N- to C-terminus: 4-hydroxy-tetrahydrodipicolinate reductase (265 aa).

NAD(+)-binding positions include 7–12 (GASGRM) and Asp-33. Position 34 (Arg-34) interacts with NADP(+). Residues 96 to 98 (GTT) and 120 to 123 (SANM) each bind NAD(+). Catalysis depends on His-153, which acts as the Proton donor/acceptor. His-154 lines the (S)-2,3,4,5-tetrahydrodipicolinate pocket. Lys-157 functions as the Proton donor in the catalytic mechanism. Position 163–164 (163–164 (GT)) interacts with (S)-2,3,4,5-tetrahydrodipicolinate.

Belongs to the DapB family.

The protein localises to the cytoplasm. The catalysed reaction is (S)-2,3,4,5-tetrahydrodipicolinate + NAD(+) + H2O = (2S,4S)-4-hydroxy-2,3,4,5-tetrahydrodipicolinate + NADH + H(+). It catalyses the reaction (S)-2,3,4,5-tetrahydrodipicolinate + NADP(+) + H2O = (2S,4S)-4-hydroxy-2,3,4,5-tetrahydrodipicolinate + NADPH + H(+). Its pathway is amino-acid biosynthesis; L-lysine biosynthesis via DAP pathway; (S)-tetrahydrodipicolinate from L-aspartate: step 4/4. In terms of biological role, catalyzes the conversion of 4-hydroxy-tetrahydrodipicolinate (HTPA) to tetrahydrodipicolinate. This is 4-hydroxy-tetrahydrodipicolinate reductase from Burkholderia pseudomallei (strain 1106a).